Here is a 350-residue protein sequence, read N- to C-terminus: Alcohol dehydrogenase 1 (350 aa).

Residues Cys-44, Thr-46, His-67, Cys-98, Cys-101, Cys-104, Cys-112, and Cys-154 each contribute to the Zn(2+) site. Positions 46 and 67 each coordinate an alcohol. Thr-46 provides a ligand contact to NAD(+). NAD(+)-binding positions include Gly-178–Gly-182, Asp-202, Lys-207, Ile-271–Leu-273, and Arg-343.

Belongs to the zinc-containing alcohol dehydrogenase family. As to quaternary structure, homotetramer. Requires Zn(2+) as cofactor.

Its subcellular location is the cytoplasm. It is found in the secreted. It carries out the reaction a primary alcohol + NAD(+) = an aldehyde + NADH + H(+). The enzyme catalyses a secondary alcohol + NAD(+) = a ketone + NADH + H(+). This Emericella nidulans (strain FGSC A4 / ATCC 38163 / CBS 112.46 / NRRL 194 / M139) (Aspergillus nidulans) protein is Alcohol dehydrogenase 1 (alcA).